We begin with the raw amino-acid sequence, 494 residues long: Ribosomal lysine N-methyltransferase 4 (494 aa).

One can recognise an SET domain in the interval 25–265 (PKIEIKDLCC…KNEQVYNIYG (241 aa)). Tyr264 is an S-adenosyl-L-methionine binding site.

This sequence belongs to the class V-like SAM-binding methyltransferase superfamily. Histone-lysine methyltransferase family. SETD6 subfamily.

Its subcellular location is the nucleus. In terms of biological role, S-adenosyl-L-methionine-dependent protein-lysine N-methyltransferase that monomethylates 60S ribosomal protein L42 (RPL42A and RPL42B) at 'Lys-55'. The protein is Ribosomal lysine N-methyltransferase 4 of Saccharomyces cerevisiae (strain ATCC 204508 / S288c) (Baker's yeast).